A 106-amino-acid chain; its full sequence is Thioredoxin-2 (106 aa).

The 105-residue stretch at 2-106 folds into the Thioredoxin domain; sequence VYQIKDKADL…RLEDVIKANI (105 aa). Residues cysteine 32 and cysteine 35 each act as nucleophile in the active site. Cysteines 32 and 35 form a disulfide.

The protein belongs to the thioredoxin family.

Its function is as follows. Participates in various redox reactions through the reversible oxidation of its active center dithiol to a disulfide and catalyzes dithiol-disulfide exchange reactions. As a reducing substrate of peroxiredoxin 1, thioredoxin 2 is preferred over thioredoxin 1. This is Thioredoxin-2 from Drosophila yakuba (Fruit fly).